Consider the following 387-residue polypeptide: GTPase Obg (387 aa).

Residues 1 to 159 (MKFVDEAIIR…RSLKLELLLL (159 aa)) enclose the Obg domain. The OBG-type G domain maps to 160–333 (ADVGLLGMPN…LALKLLDFID (174 aa)). GTP-binding positions include 166–173 (GMPNAGKS), 191–195 (FTTLV), 213–216 (DIPG), 283–286 (NKAD), and 314–316 (SAY). Mg(2+) contacts are provided by S173 and T193.

Belongs to the TRAFAC class OBG-HflX-like GTPase superfamily. OBG GTPase family. As to quaternary structure, monomer. The cofactor is Mg(2+).

The protein resides in the cytoplasm. Functionally, an essential GTPase which binds GTP, GDP and possibly (p)ppGpp with moderate affinity, with high nucleotide exchange rates and a fairly low GTP hydrolysis rate. Plays a role in control of the cell cycle, stress response, ribosome biogenesis and in those bacteria that undergo differentiation, in morphogenesis control. This Shewanella pealeana (strain ATCC 700345 / ANG-SQ1) protein is GTPase Obg.